The following is a 1706-amino-acid chain: Serine/threonine-protein kinase vps15 (1706 aa).

The Protein kinase domain maps to 24–293 (YHNERSLGDS…YLQKYRGTVF (270 aa)). ATP is bound by residues 30–38 (LGDSHFLRT) and lysine 52. The stretch at 56-94 (NKLPEISLSSIVNLLKEEQENISYRVPNAVPYIKTLVTL) is one HEAT 1 repeat. Aspartate 146 functions as the Proton acceptor in the catalytic mechanism. 7 HEAT repeats span residues 426 to 465 (LYGA…NICD), 466 to 504 (ESKL…NVTS), 511 to 549 (FLFQ…QASK), 587 to 625 (HDLV…FFGK), 626 to 664 (AKSN…FIGP), 665 to 703 (RSVD…LHLF), and 705 to 743 (KLVV…SFDD). Serine 957 carries the post-translational modification Phosphoserine. Tyrosine 958 is modified (phosphotyrosine). Residues 982–1099 (TTKPKDVSQS…GKSLAPLISS (118 aa)) are disordered. Composition is skewed to basic and acidic residues over residues 984–1002 (KPKD…RESN) and 1014–1023 (DVYRQTDNPE). Residues 1029–1055 (DTASSKVDTHNPTVTQPTDDTGGLNSY) are compositionally biased toward polar residues. Residues 1056 to 1069 (NTENPLLTNNTLEP) are compositionally biased toward low complexity. Over residues 1079–1090 (KDSDKHAKESKG) the composition is skewed to basic and acidic residues. WD repeat units follow at residues 1213–1252 (LLDG…RHIS) and 1368–1407 (LQCG…LSCS). Polar residues predominate over residues 1431–1442 (NEYTSGNNNSPV). Residues 1431–1461 (NEYTSGNNNSPVTKVPGSSSTSSSSTQPINS) are disordered. The stretch at 1577 to 1622 (CISSPIYRYRGPSAGSVEREPLFLIAASGSPHAFIWNPHNVSASSS) is one WD 3 repeat.

It belongs to the protein kinase superfamily. Ser/Thr protein kinase family. As to quaternary structure, component of the autophagy-specific vps34 PI3-kinase complex I composed of vps15, atg6, pik3/vps34, atg14 and atg38. Also a component of the vps34 PI3-kinase complex II composed of atg6, pik3, vps15 and vps38.

The catalysed reaction is L-seryl-[protein] + ATP = O-phospho-L-seryl-[protein] + ADP + H(+). It catalyses the reaction L-threonyl-[protein] + ATP = O-phospho-L-threonyl-[protein] + ADP + H(+). Its function is as follows. Functions as a part of the autophagy-specific VPS34 PI3-kinase complex I that plays a role in autophagosome assembly. This complex is essential to recruit the atg8-phosphatidylinositol conjugate and the atg12-atg5 conjugate to the pre-autophagosomal structure. Also functions as part of the VPS34 PI3-kinase complex II. This is Serine/threonine-protein kinase vps15 from Schizosaccharomyces pombe (strain 972 / ATCC 24843) (Fission yeast).